The chain runs to 362 residues: Glutamate 5-kinase (362 aa).

Lys-3 is a binding site for ATP. Substrate-binding residues include Ser-43, Asp-128, and Asn-140. ATP contacts are provided by residues 160–161 and 202–208; these read TD and TGGMRTK. The 82-residue stretch at 267–348 folds into the PUA domain; it reads AGAILVDAGA…RDIENVLGYS (82 aa).

This sequence belongs to the glutamate 5-kinase family.

It localises to the cytoplasm. The catalysed reaction is L-glutamate + ATP = L-glutamyl 5-phosphate + ADP. Its pathway is amino-acid biosynthesis; L-proline biosynthesis; L-glutamate 5-semialdehyde from L-glutamate: step 1/2. Functionally, catalyzes the transfer of a phosphate group to glutamate to form L-glutamate 5-phosphate. This is Glutamate 5-kinase from Xanthomonas oryzae pv. oryzae (strain MAFF 311018).